Here is a 141-residue protein sequence, read N- to C-terminus: Hemoglobin subunit alpha-A (141 aa).

A Globin domain is found at 1–141 (VLTEEDKSRV…VAKTLVSRYR (141 aa)). Residue histidine 58 coordinates O2. Position 87 (histidine 87) interacts with heme b.

This sequence belongs to the globin family. As to quaternary structure, heterotetramer of two alpha chains and two beta chains. As to expression, red blood cells.

Functionally, involved in oxygen transport from the lung to the various peripheral tissues. In Drymarchon melanurus erebennus (Texas indigo snake), this protein is Hemoglobin subunit alpha-A.